The following is a 280-amino-acid chain: Suppressor of disruption of TFIIS (280 aa).

It belongs to the SSM1 family.

In terms of biological role, could be an enzyme that inactivates 6-azauracil by modifying it. This Saccharomyces cerevisiae (strain ATCC 204508 / S288c) (Baker's yeast) protein is Suppressor of disruption of TFIIS (SDT1).